The sequence spans 683 residues: Receptor-like serine/threonine-protein kinase At2g45590 (683 aa).

Positions 1–21 (MPSRLSPPDIPPLQPTPTVSD) are disordered. Over 1 to 30 (MPSRLSPPDIPPLQPTPTVSDGHHRFQTLP) the chain is Extracellular. The chain crosses the membrane as a helical span at residues 31–51 (LIIAGSLTLTGVLLILVTLLI). The Cytoplasmic segment spans residues 52–683 (YRRLYRNRTA…FPFKSRKKAR (632 aa)). The 573-residue stretch at 92 to 664 (FSESTHLGHG…GVSEPPHLPF (573 aa)) folds into the Protein kinase domain. Residues 98–106 (LGHGGFGSV) and Lys-121 contribute to the ATP site. Asp-223 functions as the Proton acceptor in the catalytic mechanism. A disordered region spans residues 406-436 (ERPSNNKEWINNGDGSSSVSKKKKKEKKRKP). Over residues 411-424 (NKEWINNGDGSSSV) the composition is skewed to polar residues. Positions 425–436 (SKKKKKEKKRKP) are enriched in basic residues.

Belongs to the protein kinase superfamily. Ser/Thr protein kinase family.

The protein resides in the cell membrane. It carries out the reaction L-seryl-[protein] + ATP = O-phospho-L-seryl-[protein] + ADP + H(+). The catalysed reaction is L-threonyl-[protein] + ATP = O-phospho-L-threonyl-[protein] + ADP + H(+). This is Receptor-like serine/threonine-protein kinase At2g45590 from Arabidopsis thaliana (Mouse-ear cress).